Reading from the N-terminus, the 198-residue chain is Probable nicotinate-nucleotide adenylyltransferase (198 aa).

This sequence belongs to the NadD family.

It catalyses the reaction nicotinate beta-D-ribonucleotide + ATP + H(+) = deamido-NAD(+) + diphosphate. It participates in cofactor biosynthesis; NAD(+) biosynthesis; deamido-NAD(+) from nicotinate D-ribonucleotide: step 1/1. Functionally, catalyzes the reversible adenylation of nicotinate mononucleotide (NaMN) to nicotinic acid adenine dinucleotide (NaAD). The chain is Probable nicotinate-nucleotide adenylyltransferase from Chlorobium limicola (strain DSM 245 / NBRC 103803 / 6330).